Reading from the N-terminus, the 83-residue chain is QTSEKEGRSESRQERQELEETEIVTKSHQKNDWMEAEEKKKEEKEKEEEEEEKPKPGSIEENQLKDEKTKKDKESKNILSLCL.

2 stretches are compositionally biased toward basic and acidic residues: residues 1-44 (QTSE…KEEK) and 62-76 (NQLK…KESK). The tract at residues 1-63 (QTSEKEGRSE…PKPGSIEENQ (63 aa)) is myosin and calmodulin-binding. Residues 1 to 83 (QTSEKEGRSE…ESKNILSLCL (83 aa)) form a disordered region.

Post-translationally, in non-muscle cells, phosphorylation by CDC2 during mitosis causes caldesmon to dissociate from microfilaments. Phosphorylation reduces caldesmon binding to actin, myosin, and calmodulin as well as its inhibition of actomyosin ATPase activity. Phosphorylation also occurs in both quiescent and dividing smooth muscle cells with similar effects on the interaction with actin and calmodulin and on microfilaments reorganization.

Its subcellular location is the cytoplasm. It localises to the cytoskeleton. The protein resides in the myofibril. It is found in the stress fiber. Its function is as follows. Actin- and myosin-binding protein implicated in the regulation of actomyosin interactions in smooth muscle and nonmuscle cells (could act as a bridge between myosin and actin filaments). Stimulates actin binding of tropomyosin which increases the stabilization of actin filament structure. In muscle tissues, inhibits the actomyosin ATPase by binding to F-actin. This inhibition is attenuated by calcium-calmodulin and is potentiated by tropomyosin. Interacts with actin, myosin, two molecules of tropomyosin and with calmodulin. Also plays an essential role during cellular mitosis and receptor capping. This is Non-muscle caldesmon (CALD1) from Bos taurus (Bovine).